The primary structure comprises 561 residues: Arf-GAP domain and FG repeat-containing protein 1 (561 aa).

The region spanning 11-135 is the Arf-GAP domain; it reads EKHLKMLRDM…WYVPPEQAKV (125 aa). A C4-type zinc finger spans residues 29-52; that stretch reads CFDCDQRGPTYVNMTVGSFVCTSC. Ser167 carries the post-translational modification Phosphoserine. Positions 170–193 are disordered; it reads ALHLNKGTPSQSPVVGRSQGQQQE. Residues 176–191 are compositionally biased toward polar residues; sequence GTPSQSPVVGRSQGQQ. Thr177 carries the post-translational modification Phosphothreonine. Phosphoserine occurs at positions 181 and 362. Ser367 carries an O-linked (GlcNAc) serine glycan. The tract at residues 413–433 is disordered; the sequence is SAQTQPASSGPAPFGATPSTN.

As to quaternary structure, interacts with FCHO1. Interacts with EPS15R and EPS15. In terms of processing, O-glycosylated. In terms of tissue distribution, expressed in the testes (at protein level).

The protein resides in the nucleus. It is found in the cytoplasmic vesicle. In terms of biological role, required for vesicle docking or fusion during acrosome biogenesis. May play a role in RNA trafficking or localization. This is Arf-GAP domain and FG repeat-containing protein 1 (Agfg1) from Mus musculus (Mouse).